The sequence spans 179 residues: Large ribosomal subunit protein uL10 (179 aa).

Belongs to the universal ribosomal protein uL10 family. Part of the ribosomal stalk of the 50S ribosomal subunit. The N-terminus interacts with L11 and the large rRNA to form the base of the stalk. The C-terminus forms an elongated spine to which L12 dimers bind in a sequential fashion forming a multimeric L10(L12)X complex.

In terms of biological role, forms part of the ribosomal stalk, playing a central role in the interaction of the ribosome with GTP-bound translation factors. The polypeptide is Large ribosomal subunit protein uL10 (Symbiobacterium thermophilum (strain DSM 24528 / JCM 14929 / IAM 14863 / T)).